The sequence spans 124 residues: V-type proton ATPase subunit F (124 aa).

Belongs to the V-ATPase F subunit family. As to quaternary structure, V-ATPase is a heteromultimeric enzyme composed of a peripheral catalytic V1 complex (components A to H) attached to an integral membrane V0 proton pore complex (components: a, c, c', c'', d, e, f and VOA1).

The protein localises to the vacuole membrane. In terms of biological role, subunit of the V1 complex of vacuolar(H+)-ATPase (V-ATPase), a multisubunit enzyme composed of a peripheral complex (V1) that hydrolyzes ATP and a membrane integral complex (V0) that translocates protons. V-ATPase is responsible for acidifying and maintaining the pH of intracellular compartments. The chain is V-type proton ATPase subunit F (vma7) from Neosartorya fischeri (strain ATCC 1020 / DSM 3700 / CBS 544.65 / FGSC A1164 / JCM 1740 / NRRL 181 / WB 181) (Aspergillus fischerianus).